Here is a 385-residue protein sequence, read N- to C-terminus: Putative transporter YthQ (385 aa).

A run of 8 helical transmembrane segments spans residues 24-44 (AVID…FVIY), 67-87 (WLYA…FLME), 106-128 (YALL…IVLP), 133-155 (SVLI…HIFF), 176-193 (TLVR…IVFT), 197-214 (LLAL…IRSL), 304-324 (AFTV…LLVY), and 365-385 (ILHY…LLFT).

It is found in the cell membrane. The chain is Putative transporter YthQ (ythQ) from Bacillus subtilis (strain 168).